The following is a 242-amino-acid chain: Uridylate kinase (242 aa).

An ATP-binding site is contributed by 12–15 (KLSG). Residues 20–25 (GDEGFG) are involved in allosteric activation by GTP. Residue G54 coordinates UMP. The ATP site is built by G55 and R59. Residues D74 and 135–142 (TGSPFFTT) contribute to the UMP site. T162, Y168, and D171 together coordinate ATP.

The protein belongs to the UMP kinase family. In terms of assembly, homohexamer.

The protein localises to the cytoplasm. It catalyses the reaction UMP + ATP = UDP + ADP. Its pathway is pyrimidine metabolism; CTP biosynthesis via de novo pathway; UDP from UMP (UMPK route): step 1/1. Allosterically activated by GTP. Inhibited by UTP. In terms of biological role, catalyzes the reversible phosphorylation of UMP to UDP. The protein is Uridylate kinase of Pasteurella multocida (strain Pm70).